Consider the following 269-residue polypeptide: Energy-coupling factor transporter ATP-binding protein EcfA1 (269 aa).

The ABC transporter domain maps to 8 to 242 (IVFKNVSFQY…AEGLTTIGLD (235 aa)). Position 42–49 (42–49 (GHNGSGKS)) interacts with ATP.

This sequence belongs to the ABC transporter superfamily. Energy-coupling factor EcfA family. Forms a stable energy-coupling factor (ECF) transporter complex composed of 2 membrane-embedded substrate-binding proteins (S component), 2 ATP-binding proteins (A component) and 2 transmembrane proteins (T component).

It localises to the cell membrane. ATP-binding (A) component of a common energy-coupling factor (ECF) ABC-transporter complex. Unlike classic ABC transporters this ECF transporter provides the energy necessary to transport a number of different substrates. The polypeptide is Energy-coupling factor transporter ATP-binding protein EcfA1 (Staphylococcus aureus (strain bovine RF122 / ET3-1)).